Here is a 431-residue protein sequence, read N- to C-terminus: MDSIQIVGGEKLKGTIPISGAKNAALPLMIAALLTEETLTLENIPHLADVELLIRILNNHGVGYAVDGQEFDDDGVNSRTIHFTAQKIATTRAPYELVKKMRASFWVIGPLLARCFEAYVSLPGGCAIGTRPVDFILEGLKAFGAHIAIENGYVHAKAPKGLKGAHYHFPKVTVGGTHVLLMAATMAKGTTVLENAACEPEVTNLIRTLNAMGAQITGEGTTTLTIEGVKKLQGTRIRVIADRIEAGTYAMAVAMAGGDVFLKNANPNHLTTVLKVLQKTGLEIQIEPHGIHVKRNPRNTTIMPVDIKTGPYPAFPTDLQAQFMALMTRAEGVAHITETIFENRFMHVQELNRLGAEIKLDGQTATVYGKEKLQGAPVMATDLRASVSLVIAALAAKGETIVNRVYHLDRGFERLEEKLARCGAKIQRLTA.

Phosphoenolpyruvate is bound at residue 22–23 (KN). Arg-102 is a UDP-N-acetyl-alpha-D-glucosamine binding site. Cys-126 acts as the Proton donor in catalysis. A 2-(S-cysteinyl)pyruvic acid O-phosphothioketal modification is found at Cys-126. Residues Asp-318 and Ile-340 each coordinate UDP-N-acetyl-alpha-D-glucosamine.

This sequence belongs to the EPSP synthase family. MurA subfamily.

The protein resides in the cytoplasm. The enzyme catalyses phosphoenolpyruvate + UDP-N-acetyl-alpha-D-glucosamine = UDP-N-acetyl-3-O-(1-carboxyvinyl)-alpha-D-glucosamine + phosphate. It functions in the pathway cell wall biogenesis; peptidoglycan biosynthesis. In terms of biological role, cell wall formation. Adds enolpyruvyl to UDP-N-acetylglucosamine. This chain is UDP-N-acetylglucosamine 1-carboxyvinyltransferase, found in Bartonella tribocorum (strain CIP 105476 / IBS 506).